The following is a 231-amino-acid chain: Cytochrome c oxidase assembly factor 7 (231 aa).

A2 is subject to N-acetylalanine. Sel1-like repeat units lie at residues 34 to 66 (PDGC…EENQ), 68 to 104 (SDSC…EKPG), 108 to 146 (IAAC…DGGY), 147 to 183 (TSSC…DLGH), and 184 to 219 (IWAC…QLHK).

It belongs to the hcp beta-lactamase family. In terms of assembly, interacts with CHCHD4/MIA40 through transient intermolecular disulfide bonds.

It is found in the mitochondrion intermembrane space. Functionally, required for assembly of mitochondrial respiratory chain complex I and complex IV. The polypeptide is Cytochrome c oxidase assembly factor 7 (COA7) (Homo sapiens (Human)).